The chain runs to 805 residues: Leucine--tRNA ligase (805 aa).

A 'HIGH' region motif is present at residues 40–51 (PYPSGAGLHVGH). Positions 576–580 (KMSKS) match the 'KMSKS' region motif. K579 contacts ATP.

This sequence belongs to the class-I aminoacyl-tRNA synthetase family.

The protein localises to the cytoplasm. The enzyme catalyses tRNA(Leu) + L-leucine + ATP = L-leucyl-tRNA(Leu) + AMP + diphosphate. The protein is Leucine--tRNA ligase of Anoxybacillus flavithermus (strain DSM 21510 / WK1).